Consider the following 108-residue polypeptide: ATP-dependent Clp protease adapter protein ClpS (108 aa).

Residues 1 to 15 are compositionally biased toward basic and acidic residues; the sequence is MPHESSPDSQHEHGV. Residues 1–22 are disordered; it reads MPHESSPDSQHEHGVAVEAARP.

The protein belongs to the ClpS family. In terms of assembly, binds to the N-terminal domain of the chaperone ClpA.

Its function is as follows. Involved in the modulation of the specificity of the ClpAP-mediated ATP-dependent protein degradation. This Stenotrophomonas maltophilia (strain K279a) protein is ATP-dependent Clp protease adapter protein ClpS.